The following is a 338-amino-acid chain: Large ribosomal subunit protein uL10 (338 aa).

Residues 298 to 308 are compositionally biased toward low complexity; the sequence is AAQQTQTQQST. The tract at residues 298-338 is disordered; it reads AAQQTQTQQSTAEEKKEEKKEEEKKGPSEEEIGSGLASLFG. The segment covering 309–325 has biased composition (basic and acidic residues); sequence AEEKKEEKKEEEKKGPS.

It belongs to the universal ribosomal protein uL10 family. As to quaternary structure, part of the 50S ribosomal subunit. Forms part of the ribosomal stalk which helps the ribosome interact with GTP-bound translation factors. Forms a heptameric L10(L12)2(L12)2(L12)2 complex, where L10 forms an elongated spine to which the L12 dimers bind in a sequential fashion.

Its function is as follows. Forms part of the ribosomal stalk, playing a central role in the interaction of the ribosome with GTP-bound translation factors. This Saccharolobus islandicus (strain M.16.27) (Sulfolobus islandicus) protein is Large ribosomal subunit protein uL10.